Reading from the N-terminus, the 276-residue chain is N-acyl homoserine lactonase AiiB (276 aa).

Residues histidine 111, histidine 113, histidine 116, histidine 191, aspartate 213, and histidine 259 each contribute to the Zn(2+) site.

Belongs to the metallo-beta-lactamase superfamily. It depends on Zn(2+) as a cofactor.

It catalyses the reaction an N-acyl-L-homoserine lactone + H2O = an N-acyl-L-homoserine + H(+). The protein is N-acyl homoserine lactonase AiiB of Rhizobium rhizogenes (strain K84 / ATCC BAA-868) (Agrobacterium radiobacter).